The chain runs to 89 residues: MNFSIFLFLIGILGFVLNRKNIILMLISIEIMLLAITFLILISSFNFDDILGQTFAIYIITIAGAESAIGLGILVAYYRLRGSISIQYK.

3 consecutive transmembrane segments (helical) span residues 1-21 (MNFS…NRKN), 22-42 (IILM…LILI), and 55-75 (FAIY…GILV).

It belongs to the complex I subunit 4L family.

The protein resides in the mitochondrion membrane. It catalyses the reaction a ubiquinone + NADH + 5 H(+)(in) = a ubiquinol + NAD(+) + 4 H(+)(out). Functionally, core subunit of the mitochondrial membrane respiratory chain NADH dehydrogenase (Complex I) that is believed to belong to the minimal assembly required for catalysis. Complex I functions in the transfer of electrons from NADH to the respiratory chain. The immediate electron acceptor for the enzyme is believed to be ubiquinone. This is NADH-ubiquinone oxidoreductase chain 4L (nd4L) from Talaromyces marneffei (Penicillium marneffei).